Consider the following 207-residue polypeptide: Small ribosomal subunit protein uS4 (207 aa).

A disordered region spans residues 31-55; that stretch reads KCKLDSKPGQHGRTSGARTSDYGTQ. Positions 42–53 are enriched in polar residues; that stretch reads GRTSGARTSDYG. The S4 RNA-binding domain maps to 97–157; sequence SRLDNVVYRM…EQKKKQARIL (61 aa).

The protein belongs to the universal ribosomal protein uS4 family. As to quaternary structure, part of the 30S ribosomal subunit. Contacts protein S5. The interaction surface between S4 and S5 is involved in control of translational fidelity.

In terms of biological role, one of the primary rRNA binding proteins, it binds directly to 16S rRNA where it nucleates assembly of the body of the 30S subunit. Functionally, with S5 and S12 plays an important role in translational accuracy. This chain is Small ribosomal subunit protein uS4, found in Paraburkholderia xenovorans (strain LB400).